A 461-amino-acid chain; its full sequence is Dihydrolipoyl dehydrogenase (461 aa).

FAD-binding positions include 34 to 42 (EEDQAGGTC), Lys-51, and Gly-114. A disulfide bridge links Cys-42 with Cys-47. NAD(+) is bound by residues 177-181 (GGGVI), Glu-200, and 261-264 (AIGR). 2 residues coordinate FAD: Asp-304 and Ala-312. The active-site Proton acceptor is His-436.

Belongs to the class-I pyridine nucleotide-disulfide oxidoreductase family. Requires FAD as cofactor.

It is found in the cytoplasm. The enzyme catalyses N(6)-[(R)-dihydrolipoyl]-L-lysyl-[protein] + NAD(+) = N(6)-[(R)-lipoyl]-L-lysyl-[protein] + NADH + H(+). In terms of biological role, the branched-chain alpha-keto dehydrogenase complex catalyzes the overall conversion of alpha-keto acids to acyl-CoA and CO(2). It contains multiple copies of 3 enzymatic components: branched-chain alpha-keto acid decarboxylase (E1), lipoamide acyltransferase (E2) and lipoamide dehydrogenase (E3). This is Dihydrolipoyl dehydrogenase (lpdA) from Chlamydia pneumoniae (Chlamydophila pneumoniae).